The following is a 366-amino-acid chain: Ribosomal RNA large subunit methyltransferase M (366 aa).

Residues Ser-188, 221 to 224, Asp-240, Asp-260, and Asp-277 each bind S-adenosyl-L-methionine; that span reads CPGG. Lys-306 (proton acceptor) is an active-site residue.

Belongs to the class I-like SAM-binding methyltransferase superfamily. RNA methyltransferase RlmE family. RlmM subfamily. In terms of assembly, monomer.

It is found in the cytoplasm. The catalysed reaction is cytidine(2498) in 23S rRNA + S-adenosyl-L-methionine = 2'-O-methylcytidine(2498) in 23S rRNA + S-adenosyl-L-homocysteine + H(+). In terms of biological role, catalyzes the 2'-O-methylation at nucleotide C2498 in 23S rRNA. The sequence is that of Ribosomal RNA large subunit methyltransferase M from Dickeya chrysanthemi (strain Ech1591) (Dickeya zeae (strain Ech1591)).